Consider the following 90-residue polypeptide: Protein S100-A6 (90 aa).

EF-hand domains follow at residues 12-47 and 48-83; these read LIGI…IGSK and LQDA…LAMI. Ca(2+) contacts are provided by T28 and E33. The residue at position 40 (K40) is an N6-acetyllysine. S46 bears the Phosphoserine mark. At K47 the chain carries N6-acetyllysine; alternate. K47 is modified (N6-succinyllysine; alternate). Ca(2+) is bound by residues D61, N63, D65, E67, and E72.

The protein belongs to the S-100 family. In terms of assembly, homodimer; head to tail assembly of 2 subunits. Interacts with CACYBP in a calcium-dependent manner. Interacts with ANXA2 and ANXA11 (via N-terminus). Interacts with SUGT1. Interacts with TP53; has higher affinity for TP53 that is phosphorylated on its N-terminal domain, and lower affinity for TP53 that is phosphorylated on its C-terminal domain. Interacts with tropomyosin. Interacts with FKBP4. Interacts with PPP5C (via TPR repeats); the interaction is calcium-dependent and modulates PPP5C activity. Interacts with TPPP; this interaction inhibits TPPP dimerization.

It localises to the nucleus envelope. The protein resides in the cytoplasm. Its subcellular location is the cell membrane. May function as calcium sensor and modulator, contributing to cellular calcium signaling. May function by interacting with other proteins, such as TPR-containing proteins, and indirectly play a role in many physiological processes such as the reorganization of the actin cytoskeleton and in cell motility. Binds 2 calcium ions. Calcium binding is cooperative. This is Protein S100-A6 (S100A6) from Oryctolagus cuniculus (Rabbit).